The chain runs to 237 residues: UPF0173 metal-dependent hydrolase BOV_A0561 (237 aa).

It belongs to the UPF0173 family.

This chain is UPF0173 metal-dependent hydrolase BOV_A0561, found in Brucella ovis (strain ATCC 25840 / 63/290 / NCTC 10512).